The following is a 67-amino-acid chain: MGNIRQTFIKRVARELFDRYPDQFTKDFEHNKKKVGELTNVTSKTIRNRIAGYITRLVRMKEEGKML.

Belongs to the eukaryotic ribosomal protein eS17 family.

This chain is Small ribosomal subunit protein eS17, found in Thermococcus onnurineus (strain NA1).